The chain runs to 246 residues: Pyridoxine 5'-phosphate synthase (246 aa).

Asn-12 provides a ligand contact to 3-amino-2-oxopropyl phosphate. Asp-14–His-15 lines the 1-deoxy-D-xylulose 5-phosphate pocket. Residue Arg-23 coordinates 3-amino-2-oxopropyl phosphate. Catalysis depends on His-48, which acts as the Proton acceptor. 1-deoxy-D-xylulose 5-phosphate-binding residues include Arg-50 and His-55. Glu-75 acts as the Proton acceptor in catalysis. Thr-105 serves as a coordination point for 1-deoxy-D-xylulose 5-phosphate. His-196 acts as the Proton donor in catalysis. 3-amino-2-oxopropyl phosphate contacts are provided by residues Gly-197 and Gly-218–His-219.

Belongs to the PNP synthase family. In terms of assembly, homooctamer; tetramer of dimers.

The protein resides in the cytoplasm. It carries out the reaction 3-amino-2-oxopropyl phosphate + 1-deoxy-D-xylulose 5-phosphate = pyridoxine 5'-phosphate + phosphate + 2 H2O + H(+). Its pathway is cofactor biosynthesis; pyridoxine 5'-phosphate biosynthesis; pyridoxine 5'-phosphate from D-erythrose 4-phosphate: step 5/5. Functionally, catalyzes the complicated ring closure reaction between the two acyclic compounds 1-deoxy-D-xylulose-5-phosphate (DXP) and 3-amino-2-oxopropyl phosphate (1-amino-acetone-3-phosphate or AAP) to form pyridoxine 5'-phosphate (PNP) and inorganic phosphate. This Pseudomonas syringae pv. syringae (strain B728a) protein is Pyridoxine 5'-phosphate synthase.